The sequence spans 199 residues: Probable chemoreceptor glutamine deamidase CheD (199 aa).

Belongs to the CheD family.

It carries out the reaction L-glutaminyl-[protein] + H2O = L-glutamyl-[protein] + NH4(+). Its function is as follows. Probably deamidates glutamine residues to glutamate on methyl-accepting chemotaxis receptors (MCPs), playing an important role in chemotaxis. This Cereibacter sphaeroides (Rhodobacter sphaeroides) protein is Probable chemoreceptor glutamine deamidase CheD.